Reading from the N-terminus, the 237-residue chain is Small ribosomal subunit protein uS5 (237 aa).

A disordered region spans residues methionine 1–glycine 59. Positions proline 20–asparagine 55 are enriched in basic and acidic residues. One can recognise an S5 DRBM domain in the interval leucine 63–valine 126.

It belongs to the universal ribosomal protein uS5 family. As to quaternary structure, part of the 30S ribosomal subunit. Contacts proteins S4 and S8.

Its function is as follows. With S4 and S12 plays an important role in translational accuracy. Located at the back of the 30S subunit body where it stabilizes the conformation of the head with respect to the body. In Novosphingobium aromaticivorans (strain ATCC 700278 / DSM 12444 / CCUG 56034 / CIP 105152 / NBRC 16084 / F199), this protein is Small ribosomal subunit protein uS5.